Here is a 212-residue protein sequence, read N- to C-terminus: Golgi SNAP receptor complex member 2 (212 aa).

Met-1 bears the N-acetylmethionine mark. Residues 1–190 (MEPLYQQTHK…LIEKRAFQDK (190 aa)) lie on the Cytoplasmic side of the membrane. Residues 61-107 (NRRQNAKLRVDQLKYDVQHLQTALRNFQHRRQAKEQQERQRDELLSR) are a coiled coil. Positions 118–120 (IPM) match the IxM motif; signal for cargo packaging into COPII-coated vesicles motif. A helical; Anchor for type IV membrane protein transmembrane segment spans residues 191 to 211 (YFMIGGMLLTCAVMFLVVQYL). Thr-212 is a topological domain (vesicular).

This sequence belongs to the GOSR2 family. In terms of assembly, part of a unique SNARE complex composed of the Golgi SNAREs GOSR1, STX5 and YKT6. Interacts with BET1.

The protein resides in the golgi apparatus. Its subcellular location is the cis-Golgi network membrane. It is found in the golgi apparatus membrane. It localises to the endoplasmic reticulum membrane. Its function is as follows. Involved in transport of proteins from the cis/medial-Golgi to the trans-Golgi network. In Rattus norvegicus (Rat), this protein is Golgi SNAP receptor complex member 2 (Gosr2).